A 167-amino-acid polypeptide reads, in one-letter code: Mitochondrial inner membrane protease subunit 1 (167 aa).

Residues S40 and K83 contribute to the active site.

It belongs to the peptidase S26 family. IMP1 subfamily. As to quaternary structure, heterodimer of 2 subunits, IMMPL1 and IMMPL2.

It localises to the mitochondrion inner membrane. Functionally, catalyzes the removal of transit peptides required for the targeting of proteins from the mitochondrial matrix, across the inner membrane, into the inter-membrane space. The sequence is that of Mitochondrial inner membrane protease subunit 1 (immp1l) from Xenopus tropicalis (Western clawed frog).